The following is a 798-amino-acid chain: Suppressor of spindle checkpoint defect 1 (798 aa).

Residues 339 to 359 (ESIQQSQVNVDDMCNRIANME) adopt a coiled-coil conformation.

Belongs to the APC5 family. The APC/C complex is probably composed of at least 12 subunits: apc-2, apc-10, apc-11, cdc-26, emb-1, emb-27, emb-30, mat-1, mat-2, mat-3, such-1 and gfi-3. In terms of tissue distribution, expressed in head neurons, vulval precursor cells and in mature sperm stored in the spermatheca.

It functions in the pathway protein modification; protein ubiquitination. In terms of biological role, probable component of the anaphase promoting complex/cyclosome (APC/C), a cell cycle-regulated E3 ubiquitin ligase that controls progression through mitosis and the G1 phase of the cell cycle. The APC/C complex acts by mediating ubiquitination and subsequent degradation of target proteins. Required for the metaphase to anaphase transition in meiosis. Plays a role in the segregation of DNA and centrioles during meiosis in male germ cells. The chain is Suppressor of spindle checkpoint defect 1 from Caenorhabditis elegans.